The chain runs to 118 residues: MSEVMDYKSRLSDPASRKFETFSYLPAMNAADIRKQVEYLVSKGWNPAIEHTEPEHLMDSYWYMWKLPMFGETDIDRILGEAEACHKANPNNHVRLVGYDNFAQSQGAAMVIYRGKTV.

Belongs to the RuBisCO small chain family. In terms of assembly, heterohexadecamer of 8 large and 8 small subunits.

In terms of biological role, ruBisCO catalyzes two reactions: the carboxylation of D-ribulose 1,5-bisphosphate, the primary event in carbon dioxide fixation, as well as the oxidative fragmentation of the pentose substrate. Both reactions occur simultaneously and in competition at the same active site. Although the small subunit is not catalytic it is essential for maximal activity. The polypeptide is Ribulose bisphosphate carboxylase small subunit (Thiobacillus denitrificans (strain ATCC 25259 / T1)).